The following is a 350-amino-acid chain: Ketol-acid reductoisomerase (NADP(+)) 2 (350 aa).

Residues 3–183 (ATIWYEKDAD…GALRAGAIKT (181 aa)) form the KARI N-terminal Rossmann domain. NADP(+) is bound by residues 26–29 (YGSQ), Arg-49, Ser-52, Ser-54, and 84–87 (DQYQ). His-109 is an active-site residue. Gly-135 is a binding site for NADP(+). Residues 184–327 (TFTEETETDL…PKLRAMFSWN (144 aa)) enclose the KARI C-terminal knotted domain. Residues Asp-192, Glu-196, Glu-228, and Glu-232 each contribute to the Mg(2+) site. Ser-253 is a binding site for substrate. Positions 331 to 350 (AKDKDETESFNGKIARTQVQ) are disordered.

The protein belongs to the ketol-acid reductoisomerase family. Requires Mg(2+) as cofactor.

The catalysed reaction is (2R)-2,3-dihydroxy-3-methylbutanoate + NADP(+) = (2S)-2-acetolactate + NADPH + H(+). It catalyses the reaction (2R,3R)-2,3-dihydroxy-3-methylpentanoate + NADP(+) = (S)-2-ethyl-2-hydroxy-3-oxobutanoate + NADPH + H(+). The protein operates within amino-acid biosynthesis; L-isoleucine biosynthesis; L-isoleucine from 2-oxobutanoate: step 2/4. It functions in the pathway amino-acid biosynthesis; L-valine biosynthesis; L-valine from pyruvate: step 2/4. Involved in the biosynthesis of branched-chain amino acids (BCAA). Catalyzes an alkyl-migration followed by a ketol-acid reduction of (S)-2-acetolactate (S2AL) to yield (R)-2,3-dihydroxy-isovalerate. In the isomerase reaction, S2AL is rearranged via a Mg-dependent methyl migration to produce 3-hydroxy-3-methyl-2-ketobutyrate (HMKB). In the reductase reaction, this 2-ketoacid undergoes a metal-dependent reduction by NADPH to yield (R)-2,3-dihydroxy-isovalerate. In Bifidobacterium longum (strain NCC 2705), this protein is Ketol-acid reductoisomerase (NADP(+)) 2.